The sequence spans 327 residues: Ribosomal RNA small subunit methyltransferase H (327 aa).

S-adenosyl-L-methionine is bound by residues 36-38 (GGH), Asp-55, Leu-89, Asp-103, and Gln-110. Residues 286 to 327 (GAEPASDTEIEQNARAGSVRLRAAERTAAEPGRAHNPTGGVR) form a disordered region.

It belongs to the methyltransferase superfamily. RsmH family.

The protein localises to the cytoplasm. It catalyses the reaction cytidine(1402) in 16S rRNA + S-adenosyl-L-methionine = N(4)-methylcytidine(1402) in 16S rRNA + S-adenosyl-L-homocysteine + H(+). Functionally, specifically methylates the N4 position of cytidine in position 1402 (C1402) of 16S rRNA. In Parafrankia sp. (strain EAN1pec), this protein is Ribosomal RNA small subunit methyltransferase H.